The sequence spans 340 residues: Glycerol-3-phosphate dehydrogenase [NAD(P)+] (340 aa).

Residues serine 14, phenylalanine 15, arginine 35, and lysine 108 each contribute to the NADPH site. Residues lysine 108 and glycine 136 each contribute to the sn-glycerol 3-phosphate site. Alanine 140 contacts NADPH. Residues lysine 191, aspartate 244, serine 254, arginine 255, and asparagine 256 each coordinate sn-glycerol 3-phosphate. The active-site Proton acceptor is lysine 191. Position 255 (arginine 255) interacts with NADPH. Residue glutamate 281 coordinates NADPH.

Belongs to the NAD-dependent glycerol-3-phosphate dehydrogenase family.

The protein resides in the cytoplasm. The enzyme catalyses sn-glycerol 3-phosphate + NAD(+) = dihydroxyacetone phosphate + NADH + H(+). It catalyses the reaction sn-glycerol 3-phosphate + NADP(+) = dihydroxyacetone phosphate + NADPH + H(+). The protein operates within membrane lipid metabolism; glycerophospholipid metabolism. Its function is as follows. Catalyzes the reduction of the glycolytic intermediate dihydroxyacetone phosphate (DHAP) to sn-glycerol 3-phosphate (G3P), the key precursor for phospholipid synthesis. In Pseudomonas aeruginosa (strain ATCC 15692 / DSM 22644 / CIP 104116 / JCM 14847 / LMG 12228 / 1C / PRS 101 / PAO1), this protein is Glycerol-3-phosphate dehydrogenase [NAD(P)+].